A 92-amino-acid polypeptide reads, in one-letter code: Kinetoplastid membrane protein 11C (92 aa).

This sequence belongs to the KMP-11 family. In terms of assembly, monomer.

The protein localises to the cytoplasm. The protein resides in the cytoskeleton. It localises to the cell projection. Its subcellular location is the cilium. It is found in the flagellum. In terms of biological role, may be involved in the regulation of the cytoskeleton through interaction with the subpellicular microtubules. May be involved in parasite mobility and attachment to the surface of the host cell. Behaves as a strong immunogen during infection. This chain is Kinetoplastid membrane protein 11C (KMP-11C), found in Leishmania infantum.